Here is a 4965-residue protein sequence, read N- to C-terminus: Auxin transport protein BIG (4965 aa).

The next 3 membrane-spanning stretches (helical) occupy residues 289–309 (SDIC…IFSP), 646–666 (ACLA…AYEV), and 772–792 (LFLI…YEGL). The tract at residues 1383–1425 (TNQESNSTVDCDASSGEEDEDDGTSDGELVSIDRDEEEDGNSE) is disordered. The segment covering 1397–1407 (SGEEDEDDGTS) has biased composition (acidic residues). The segment at 1431-1502 (KVCTFTSSGS…RGSSCQCLKP (72 aa)) adopts a UBR-type zinc-finger fold. Positions 2437-2456 (DDAPDNHAKASAASNSTTGN) are disordered. Residues 2445-2456 (KASAASNSTTGN) show a composition bias toward low complexity. A ZZ-type zinc finger spans residues 2469–2528 (SVQYCCDGCSTVPILRRRWHCNICPDFDLCETCYEILDADRLPAPHSRDHPMSAIPIELD). 8 residues coordinate Zn(2+): cysteine 2474, cysteine 2477, cysteine 2489, cysteine 2492, cysteine 2498, cysteine 2501, histidine 2514, and histidine 2518. The interval 2997–3037 (NAQKTESGDIGSSTRTGSQSSDSKKKRKGDDSSEGSSEKSC) is disordered. The span at 3007–3017 (GSSTRTGSQSS) shows a compositional bias: low complexity. Positions 3024–3037 (KGDDSSEGSSEKSC) are enriched in basic and acidic residues. An MYND-type; degenerate zinc finger spans residues 3319 to 3359 (CPRCSRSVTDKHGICSNCHENAYQCRQCRNINYENLDSFLC). The tract at residues 3672–3721 (PKSDSGEKEPGMGKSSLMQAKNDDTVGHSVTNLSTSKTQSELSGKIPDGS) is disordered. Positions 3699 to 3713 (HSVTNLSTSKTQSEL) are enriched in polar residues. Residues 4433-4963 (PSIPLILSML…DFVRAIIHGA (531 aa)) form a UBR4 E3 catalytic module region. The HemiRING-type zinc-finger motif lies at 4562-4681 (GLACMVCREG…WDQLNSLGRA (120 aa)). Zn(2+)-binding residues include cysteine 4565, cysteine 4568, histidine 4615, and cysteine 4618. Residues 4684–4963 (SRLRLLTYDI…DFVRAIIHGA (280 aa)) enclose the UZI domain. Over residues 4753-4770 (SSSPSTPESPVRLSALSG) the composition is skewed to low complexity. Disordered stretches follow at residues 4753–4778 (SSSP…SGSS) and 4822–4846 (STLK…ADSN). Residues 4824 to 4845 (LKLSADTSSSAVRSDEGSSADS) show a composition bias toward polar residues.

This sequence belongs to the UBR4 family.

It localises to the membrane. Functionally, required for auxin efflux and polar auxin transport (PAT) influencing auxin-mediated developmental responses (e.g. cell elongation, apical dominance, lateral root production, inflorescence architecture, general growth and development). The sequence is that of Auxin transport protein BIG from Oryza sativa subsp. japonica (Rice).